The primary structure comprises 296 residues: Origin of replication complex subunit 6 (296 aa).

The interval 212-296 (PSKRKHDDDS…MALEVSSAAN (85 aa)) is disordered. Positions 220–236 (DSDSSGESSGDDQDELD) are enriched in acidic residues. Residues 254–264 (WKSSVLSSNKQ) show a composition bias toward polar residues.

This sequence belongs to the ORC6 family. As to quaternary structure, component of the origin recognition complex (ORC) composed of at least ORC1, ORC2, ORC3, ORC4, ORC5 and ORC6. ORC is regulated in a cell-cycle and development dependent manner. It is sequentially assembled at the exit from anaphase of mitosis and disassembled as cells enter S phase.

The protein resides in the nucleus. Its function is as follows. Component of the origin recognition complex (ORC) that binds origins of replication. DNA-binding is ATP-dependent. The specific DNA sequences that define origins of replication have not been identified yet. ORC is required to assemble the pre-replication complex necessary to initiate DNA replication. This is Origin of replication complex subunit 6 from Oryza sativa subsp. indica (Rice).